Reading from the N-terminus, the 537-residue chain is Phosphoenolpyruvate carboxykinase (ATP) (537 aa).

Substrate-binding residues include Arg61, Tyr195, and Lys201. Residues Lys201, His220, and 236–244 each bind ATP; that span reads GLSGTGKTT. Residues Lys201 and His220 each coordinate Mn(2+). Asp257 provides a ligand contact to Mn(2+). ATP is bound by residues Glu285, Arg323, and Thr448. Arg323 serves as a coordination point for substrate.

The protein belongs to the phosphoenolpyruvate carboxykinase (ATP) family. Mn(2+) serves as cofactor.

Its subcellular location is the cytoplasm. The enzyme catalyses oxaloacetate + ATP = phosphoenolpyruvate + ADP + CO2. It participates in carbohydrate biosynthesis; gluconeogenesis. Its function is as follows. Involved in the gluconeogenesis. Catalyzes the conversion of oxaloacetate (OAA) to phosphoenolpyruvate (PEP) through direct phosphoryl transfer between the nucleoside triphosphate and OAA. The sequence is that of Phosphoenolpyruvate carboxykinase (ATP) from Rhodopseudomonas palustris (strain TIE-1).